We begin with the raw amino-acid sequence, 184 residues long: Peptide deformylase (184 aa).

Fe cation contacts are provided by Cys-111 and His-154. Residue Glu-155 is part of the active site. His-158 contacts Fe cation.

This sequence belongs to the polypeptide deformylase family. The cofactor is Fe(2+).

The enzyme catalyses N-terminal N-formyl-L-methionyl-[peptide] + H2O = N-terminal L-methionyl-[peptide] + formate. Removes the formyl group from the N-terminal Met of newly synthesized proteins. Requires at least a dipeptide for an efficient rate of reaction. N-terminal L-methionine is a prerequisite for activity but the enzyme has broad specificity at other positions. The protein is Peptide deformylase of Lacticaseibacillus casei (strain BL23) (Lactobacillus casei).